Consider the following 139-residue polypeptide: uncharacterized protein (139 aa).

This is an uncharacterized protein from Aquifex aeolicus (strain VF5).